The following is a 334-amino-acid chain: MYNLIKPLLFRQDPEKTHELMLGILSKWHRTPLSLFWKQNVASKPVRVMGIDFPNPVGLAAGLDKNAECIDAFSQMGFGFIEVGTVTPVAQPGNDKPRLFRLTEDEAIINRMGFNNDGVDELVKNVKASSYKGVLGINIGKNKNTPEEQAIDDYLACLNKVYPYADYVTINISSPNTPGLRNLQHGSSLDGLLSSLKTAQLTLAKEYERYVPLVVKIAPDLEDHEVEVMAQSLLKNEMDGVIATNTTLSRDGLQSSQAGEAGGLSGKPLQDKSTRVIELLCKTLQRKIPVIGVGGIDSVESAEAKLKAGASLVQVYTGFIYQGPGLIRSIVSHL.

Residues 61 to 65 (AGLDK) and Thr-85 contribute to the FMN site. Lys-65 lines the substrate pocket. Residue 110 to 114 (NRMGF) coordinates substrate. Asn-138 and Asn-171 together coordinate FMN. Asn-171 provides a ligand contact to substrate. Ser-174 (nucleophile) is an active-site residue. Asn-176 is a binding site for substrate. FMN is bound by residues Lys-216 and Thr-244. 245–246 (NT) serves as a coordination point for substrate. FMN-binding positions include Gly-266, Gly-295, and 316–317 (YT).

It belongs to the dihydroorotate dehydrogenase family. Type 2 subfamily. As to quaternary structure, monomer. Requires FMN as cofactor.

The protein localises to the cell membrane. The catalysed reaction is (S)-dihydroorotate + a quinone = orotate + a quinol. It participates in pyrimidine metabolism; UMP biosynthesis via de novo pathway; orotate from (S)-dihydroorotate (quinone route): step 1/1. Functionally, catalyzes the conversion of dihydroorotate to orotate with quinone as electron acceptor. The sequence is that of Dihydroorotate dehydrogenase (quinone) from Idiomarina loihiensis (strain ATCC BAA-735 / DSM 15497 / L2-TR).